A 51-amino-acid chain; its full sequence is Cytoplasmic FMR1-interacting protein 1 (51 aa).

The protein belongs to the CYFIP family. As to quaternary structure, component of the WAVE1 complex composed of ABI2, CYFIP1 or CYFIP2, BRK1, NCKAP1 and WASF1/WAVE1. Within the complex, a heterodimer containing NCKAP1 and CYFIP1 interacts with a heterotrimer formed by WAVE1, ABI2 and BRK1. Component of the CYFIP1-EIF4E-FMR1 complex which is composed of CYFIP, EIF4E and FMR1. Interacts with FMR1 but does not bind to related proteins FXR1 or FXR2. Interaction with EIF4E stimulates FMR1 binding. Component of the WAVE2 complex composed of ABI1, CYFIP1/SRA1, NCKAP1/NAP1 (NCKAP1l/HEM1 in hematopoietic cells) and WASF2/WAVE2. Interacts with the active GTP-bound form of RAC1. Interacts through its C-terminus with the C-terminus of DPYSL2/CRMP2 which is necessary for DPYSL2-induced axon outgrowth. Interacts with NYAP1, NYAP2 and MYO16. Interacts with TMEM108 (via N-terminus); the interaction associates TMEM108 with the WAVE1 complex.

The protein resides in the cytoplasm. It is found in the perinuclear region. Its subcellular location is the cell projection. The protein localises to the lamellipodium. It localises to the ruffle. The protein resides in the synapse. It is found in the synaptosome. In terms of biological role, component of the CYFIP1-EIF4E-FMR1 complex which binds to the mRNA cap and mediates translational repression. In the CYFIP1-EIF4E-FMR1 complex this subunit is an adapter between EIF4E and FMR1. Promotes the translation repression activity of FMR1 in brain probably by mediating its association with EIF4E and mRNA. Regulates formation of membrane ruffles and lamellipodia. Plays a role in axon outgrowth. Binds to F-actin but not to RNA. Part of the WAVE complex that regulates actin filament reorganization via its interaction with the Arp2/3 complex. Actin remodeling activity is regulated by RAC1. Regulator of epithelial morphogenesis. As component of the WAVE1 complex, required for BDNF-NTRK2 endocytic trafficking and signaling from early endosomes. The sequence is that of Cytoplasmic FMR1-interacting protein 1 from Bos taurus (Bovine).